We begin with the raw amino-acid sequence, 227 residues long: 6-phosphogluconolactonase (227 aa).

This sequence belongs to the glucosamine/galactosamine-6-phosphate isomerase family. 6-phosphogluconolactonase subfamily.

The enzyme catalyses 6-phospho-D-glucono-1,5-lactone + H2O = 6-phospho-D-gluconate + H(+). The protein operates within carbohydrate degradation; pentose phosphate pathway; D-ribulose 5-phosphate from D-glucose 6-phosphate (oxidative stage): step 2/3. Hydrolysis of 6-phosphogluconolactone to 6-phosphogluconate. The polypeptide is 6-phosphogluconolactonase (pgl) (Helicobacter pylori (strain J99 / ATCC 700824) (Campylobacter pylori J99)).